Reading from the N-terminus, the 506-residue chain is Galactose/methyl galactoside import ATP-binding protein MglA (506 aa).

2 consecutive ABC transporter domains span residues 14-249 and 264-506; these read LEMS…VGRS and VILE…SLHL. 46–53 lines the ATP pocket; that stretch reads GENGAGKS.

This sequence belongs to the ABC transporter superfamily. Galactose/methyl galactoside importer (TC 3.A.1.2.3) family. As to quaternary structure, the complex is composed of one ATP-binding protein (MglA), two transmembrane proteins (MglC) and a solute-binding protein (MglB).

Its subcellular location is the cell inner membrane. The enzyme catalyses D-galactose(out) + ATP + H2O = D-galactose(in) + ADP + phosphate + H(+). The catalysed reaction is methyl beta-D-galactoside(out) + ATP + H2O = methyl beta-D-galactoside(in) + ADP + phosphate + H(+). Its function is as follows. Part of the ABC transporter complex MglABC involved in galactose/methyl galactoside import. Responsible for energy coupling to the transport system. The polypeptide is Galactose/methyl galactoside import ATP-binding protein MglA (Shigella flexneri serotype 5b (strain 8401)).